The chain runs to 439 residues: Homogentisate 1,2-dioxygenase (439 aa).

The Proton acceptor role is filled by histidine 293. 2 residues coordinate Fe cation: histidine 336 and glutamate 342. Homogentisate is bound by residues tyrosine 351 and histidine 372. Histidine 372 provides a ligand contact to Fe cation.

The protein belongs to the homogentisate dioxygenase family. In terms of assembly, hexamer; dimer of trimers. Fe cation is required as a cofactor.

The catalysed reaction is homogentisate + O2 = 4-maleylacetoacetate + H(+). The protein operates within amino-acid degradation; L-phenylalanine degradation; acetoacetate and fumarate from L-phenylalanine: step 4/6. Involved in the catabolism of homogentisate (2,5-dihydroxyphenylacetate or 2,5-OH-PhAc), a central intermediate in the degradation of phenylalanine and tyrosine. Catalyzes the oxidative ring cleavage of the aromatic ring of homogentisate to yield maleylacetoacetate. This Cupriavidus necator (strain ATCC 17699 / DSM 428 / KCTC 22496 / NCIMB 10442 / H16 / Stanier 337) (Ralstonia eutropha) protein is Homogentisate 1,2-dioxygenase.